We begin with the raw amino-acid sequence, 556 residues long: Oxygen-dependent choline dehydrogenase (556 aa).

4-33 serves as a coordination point for FAD; it reads DYIIIGAGSAGNVLATRLTEDPNTTVLLLE. The active-site Proton acceptor is histidine 473.

Belongs to the GMC oxidoreductase family. Requires FAD as cofactor.

The catalysed reaction is choline + A = betaine aldehyde + AH2. It carries out the reaction betaine aldehyde + NAD(+) + H2O = glycine betaine + NADH + 2 H(+). It participates in amine and polyamine biosynthesis; betaine biosynthesis via choline pathway; betaine aldehyde from choline (cytochrome c reductase route): step 1/1. Functionally, involved in the biosynthesis of the osmoprotectant glycine betaine. Catalyzes the oxidation of choline to betaine aldehyde and betaine aldehyde to glycine betaine at the same rate. The polypeptide is Oxygen-dependent choline dehydrogenase (Escherichia coli O127:H6 (strain E2348/69 / EPEC)).